Here is a 367-residue protein sequence, read N- to C-terminus: MATILTLAGDGIGPEIMTQAIDVLNAVNNKFALGLTLESGLIGGVAVDATGEPLPEETLQRARAADAVLLGAVGGPKWDGIERSKRPERGLLKIRSELGLFANLRVAKLYPQLVNASSIKPEIISGLDLLIVRELTGGIYFGEPRGIRTLENGEQQGYNTMVYSTSEINRIGKVAFELAQTRAQAAGTPAKVCSIDKANVLEVTELWKQTMIELQQAEYSDVALSHMYADNACMQLIKDPKQFDVMVTGNLFGDILSDEAAMLTGSIGMLPSASLDEAGKGMYEPCHGSAPDIAGQDIANPLATILSVAMMLRYTFKQEVAAQAIEQAVSDVLDDGLRTVDILDRNEAGLIQVGCQQMGQAVLAKLL.

75 to 88 (GPKWDGIERSKRPE) serves as a coordination point for NAD(+). The substrate site is built by Arg95, Arg105, Arg133, and Asp230. Mg(2+)-binding residues include Asp230, Asp254, and Asp258. Position 288 to 300 (288 to 300 (GSAPDIAGQDIAN)) interacts with NAD(+).

Belongs to the isocitrate and isopropylmalate dehydrogenases family. LeuB type 1 subfamily. Homodimer. The cofactor is Mg(2+). Mn(2+) is required as a cofactor.

The protein resides in the cytoplasm. It catalyses the reaction (2R,3S)-3-isopropylmalate + NAD(+) = 4-methyl-2-oxopentanoate + CO2 + NADH. It participates in amino-acid biosynthesis; L-leucine biosynthesis; L-leucine from 3-methyl-2-oxobutanoate: step 3/4. Its function is as follows. Catalyzes the oxidation of 3-carboxy-2-hydroxy-4-methylpentanoate (3-isopropylmalate) to 3-carboxy-4-methyl-2-oxopentanoate. The product decarboxylates to 4-methyl-2 oxopentanoate. The protein is 3-isopropylmalate dehydrogenase of Psychrobacter arcticus (strain DSM 17307 / VKM B-2377 / 273-4).